The sequence spans 425 residues: Histidine--tRNA ligase (425 aa).

The protein belongs to the class-II aminoacyl-tRNA synthetase family. Homodimer.

It localises to the cytoplasm. The catalysed reaction is tRNA(His) + L-histidine + ATP = L-histidyl-tRNA(His) + AMP + diphosphate + H(+). This chain is Histidine--tRNA ligase, found in Shewanella sp. (strain MR-7).